The chain runs to 191 residues: Cytochrome c oxidase subunit 6b-1 (191 aa).

Positions 1 to 14 (MADAVNAQTPSLSE) are enriched in polar residues. The segment at 1-126 (MADAVNAQTP…IKLETAPADF (126 aa)) is disordered. Residue A2 is modified to N-acetylalanine. Basic and acidic residues-rich tracts occupy residues 16-37 (YHLE…KEVA) and 45-56 (EEVKTEQAKEES). Over residues 72–98 (APESTEVASEAPAAAEDNAEETPAAAE) the composition is skewed to low complexity. The segment covering 99–114 (ENNDENASEEVAEETP) has biased composition (acidic residues). One can recognise a CHCH domain in the interval 134–177 (TRHCFTRYVEYHRCVAAKGDDAPECDKFAKFYRSLCPSEWVDRW). Residues 137–147 (CFTRYVEYHRC) carry the Cx9C motif motif. 2 cysteine pairs are disulfide-bonded: C137–C169 and C147–C158. The Cx10C motif signature appears at 158-169 (CDKFAKFYRSLC).

This sequence belongs to the cytochrome c oxidase subunit 6B (TC 3.D.4.8) family. As to expression, expressed in the whole plant.

Its subcellular location is the mitochondrion. This protein is one of the nuclear-coded polypeptide chains of cytochrome c oxidase, the terminal oxidase in mitochondrial electron transport. This protein may be one of the heme-binding subunits of the oxidase. This Arabidopsis thaliana (Mouse-ear cress) protein is Cytochrome c oxidase subunit 6b-1 (COX6B-1).